We begin with the raw amino-acid sequence, 307 residues long: Elongation factor Ts (307 aa).

The interval 79–82 (TDFV) is involved in Mg(2+) ion dislocation from EF-Tu.

This sequence belongs to the EF-Ts family.

It localises to the cytoplasm. Functionally, associates with the EF-Tu.GDP complex and induces the exchange of GDP to GTP. It remains bound to the aminoacyl-tRNA.EF-Tu.GTP complex up to the GTP hydrolysis stage on the ribosome. The polypeptide is Elongation factor Ts (Rhizobium meliloti (strain 1021) (Ensifer meliloti)).